Consider the following 497-residue polypeptide: Sestrin homolog (497 aa).

Residues S185 and S190 each carry the phosphoserine modification. The segment covering 226 to 241 (NANPDYDSQTAASSNG) has biased composition (polar residues). A disordered region spans residues 226 to 255 (NANPDYDSQTAASSNGGAPPDSANAVADGP).

This sequence belongs to the sestrin family. In terms of assembly, associates with the GATOR2 complex; the interaction is probably direct. Associates with the GATOR1 complex; the interaction is probably indirect and mediated by the GATOR2 complex. As to expression, highly expressed in muscle-enriched tissues (at protein level).

The protein resides in the nucleus. Its subcellular location is the cytoplasm. In terms of biological role, functions as a negative feedback regulator of mTOR function. This is Sestrin homolog from Drosophila melanogaster (Fruit fly).